A 614-amino-acid chain; its full sequence is Afadin- and alpha-actinin-binding protein (614 aa).

2 coiled-coil regions span residues 131–227 and 266–293; these read MDHL…IAMD and RQKQ…SLLS. Phosphoserine is present on residues Ser290, Ser293, and Ser312. The tract at residues 292 to 317 is disordered; the sequence is LSPQKKKPRERVDDSTGTVISDVEED. Residues 374 to 460 adopt a coiled-coil conformation; that stretch reads ISRQDHEQET…RSFTEAAIRL (87 aa). 3 positions are modified to phosphoserine: Ser536, Ser540, and Ser542.

The protein belongs to the ADIP family. Interacts with afadin and alpha-actinin. Interacts with VAV2. Interacts with SSX2 and SSX3. Does not interact with SSX1 and SSX4. Interacts with PCM1. Interacts with WRAP73. Widely expressed, with the highest expression in brain, intermediate expression in kidney, testis, spinal cord, liver, heart, lung, skeletal muscle, ovary, fetal liver and fetal brain, and little to no expression in pancreas and spleen. All specific brain regions showed intermediate to high expression, with highest expression in amygdala. Also expressed in fetal tissues, mainly in liver and brain.

It localises to the cell junction. It is found in the adherens junction. The protein resides in the nucleus. Its subcellular location is the cytoplasm. The protein localises to the cytoskeleton. It localises to the microtubule organizing center. It is found in the centrosome. The protein resides in the centriolar satellite. Its subcellular location is the cilium basal body. In terms of biological role, belongs to an adhesion system, which plays a role in the organization of homotypic, interneuronal and heterotypic cell-cell adherens junctions (AJs). May connect the nectin-afadin and E-cadherin-catenin system through alpha-actinin and may be involved in organization of the actin cytoskeleton at AJs through afadin and alpha-actinin. Involved in cell movement: localizes at the leading edge of moving cells in response to PDGF and is required for the formation of the leading edge and the promotion of cell movement, possibly via activation of Rac signaling. Acts as a centrosome maturation factor, probably by maintaining the integrity of the pericentriolar material and proper microtubule nucleation at mitotic spindle poles. The function seems to implicate at least in part WRAP73; the SSX2IP:WRAP73 complex is proposed to act as regulator of spindle anchoring at the mitotic centrosome. Involved in ciliogenesis. It is required for targeted recruitment of the BBSome, CEP290, RAB8, and SSTR3 to the cilia. This chain is Afadin- and alpha-actinin-binding protein (SSX2IP), found in Homo sapiens (Human).